A 537-amino-acid polypeptide reads, in one-letter code: Chaperonin GroEL (537 aa).

Residues Thr29–Pro32, Asp86–Thr90, Gly413, Asn477–Ala479, and Asp493 contribute to the ATP site.

This sequence belongs to the chaperonin (HSP60) family. As to quaternary structure, forms a cylinder of 14 subunits composed of two heptameric rings stacked back-to-back. Interacts with the co-chaperonin GroES.

It localises to the cytoplasm. The enzyme catalyses ATP + H2O + a folded polypeptide = ADP + phosphate + an unfolded polypeptide.. In terms of biological role, together with its co-chaperonin GroES, plays an essential role in assisting protein folding. The GroEL-GroES system forms a nano-cage that allows encapsulation of the non-native substrate proteins and provides a physical environment optimized to promote and accelerate protein folding. The polypeptide is Chaperonin GroEL (Lactobacillus delbrueckii subsp. bulgaricus (strain ATCC 11842 / DSM 20081 / BCRC 10696 / JCM 1002 / NBRC 13953 / NCIMB 11778 / NCTC 12712 / WDCM 00102 / Lb 14)).